A 271-amino-acid polypeptide reads, in one-letter code: Thiazole synthase (271 aa).

Lysine 104 acts as the Schiff-base intermediate with DXP in catalysis. Residues glycine 165, 192 to 193 (AG), and 214 to 215 (NT) contribute to the 1-deoxy-D-xylulose 5-phosphate site.

It belongs to the ThiG family. As to quaternary structure, homotetramer. Forms heterodimers with either ThiH or ThiS.

It localises to the cytoplasm. The enzyme catalyses [ThiS sulfur-carrier protein]-C-terminal-Gly-aminoethanethioate + 2-iminoacetate + 1-deoxy-D-xylulose 5-phosphate = [ThiS sulfur-carrier protein]-C-terminal Gly-Gly + 2-[(2R,5Z)-2-carboxy-4-methylthiazol-5(2H)-ylidene]ethyl phosphate + 2 H2O + H(+). The protein operates within cofactor biosynthesis; thiamine diphosphate biosynthesis. Its function is as follows. Catalyzes the rearrangement of 1-deoxy-D-xylulose 5-phosphate (DXP) to produce the thiazole phosphate moiety of thiamine. Sulfur is provided by the thiocarboxylate moiety of the carrier protein ThiS. In vitro, sulfur can be provided by H(2)S. The sequence is that of Thiazole synthase from Burkholderia thailandensis (strain ATCC 700388 / DSM 13276 / CCUG 48851 / CIP 106301 / E264).